We begin with the raw amino-acid sequence, 323 residues long: Down-regulator of invasive growth 2 (323 aa).

Over residues 1–10 the composition is skewed to acidic residues; it reads MNKEEQEDPQ. Positions 1–26 are disordered; sequence MNKEEQEDPQQEQISTVQENDPRNLQ. Over residues 11-26 the composition is skewed to polar residues; the sequence is QEQISTVQENDPRNLQ. The residue at position 34 (serine 34) is a Phosphoserine. Residues 67–87 are disordered; sequence LSQKEEDHSGKPPTITTSPAE. Phosphoserine occurs at positions 225, 266, and 270.

Forms a complex with DIG1, STE12 and either FUS3 or KSS1. The interaction of FUS3 with STE12 depends on the presence of both DIG1 and DIG2. STE12 is lost from FUS3/DIG1/DIG2 complex after pheromone treatment. DIG1 and DIG2 have also been reported to interact with CLN1 and CLN2. In terms of processing, phosphorylated by FUS3 and KSS1, in a pheromone-stimulated manner.

The protein localises to the nucleus. In terms of biological role, DIG2 and DIG1 are negative regulators of the filamentation and pheromone induced mating program. DIG1 and DIG2 inhibit the transcriptional activity of STE12 by direct protein-protein interaction. DIG2 binds to the DNA binding domain (DBD) of STE12 and thus inhibits transcription when overexpressed. This Saccharomyces cerevisiae (strain ATCC 204508 / S288c) (Baker's yeast) protein is Down-regulator of invasive growth 2 (DIG2).